A 560-amino-acid chain; its full sequence is 2-succinylbenzoate--CoA ligase, chloroplastic/peroxisomal (560 aa).

Residues 1–15 constitute a chloroplast transit peptide; that stretch reads MANHSRPHICQCLTR. Helical transmembrane passes span 69–89, 189–209, and 225–245; these read LFLE…PLNY, GVTI…AIAG, and IGGL…VLLP. The Microbody targeting signal motif lies at 558–560; sequence SSL.

This sequence belongs to the ATP-dependent AMP-binding enzyme family. MenE subfamily. High expression in young leaves and flowers. Not expressed in roots.

The protein localises to the plastid. It is found in the chloroplast membrane. It localises to the peroxisome membrane. It catalyses the reaction 2-succinylbenzoate + ATP + CoA = 2-succinylbenzoyl-CoA + AMP + diphosphate. Its function is as follows. Involved in the biosynthesis of phylloquinone (vitamin K1). Converts 2-succinylbenzoate (OSB) to 2-succinylbenzoyl-CoA (OSB-CoA). The sequence is that of 2-succinylbenzoate--CoA ligase, chloroplastic/peroxisomal (AAE14) from Arabidopsis thaliana (Mouse-ear cress).